We begin with the raw amino-acid sequence, 134 residues long: Transmembrane protein 100 (134 aa).

The tract at residues 1 to 23 (MTEESTKENLGAPKSPTPVTMEK) is disordered. Position 15 is a phosphoserine (S15). 2 helical membrane passes run 56–76 (CIIPFAVVVFITGIVVTAVAY) and 84–104 (IISIFGLVLLSSGLFLLASSA). The residue at position 121 (S121) is a Phosphoserine.

Interacts (via C-terminus) with TRPA1 and TRPV1. Interacts with TASOR. As to expression, expressed in dorsal root ganglia. Expressed in neurons as well as nerve fiber bundles connecting ganglia and fibers innervating muscle layer of the gastric body, jejunum, and proximal colon. Expressed in arterial endothelial cells and neurons of the central nervous system and peripheral nervous system (at protein level). Expressed strongly in lung, weakly in brain, heart and muscle. Expressed in enteric neurons and vascular tissue in the muscularis propria of the gastrointestinal tract.

The protein localises to the cell membrane. Its subcellular location is the membrane. The protein resides in the perikaryon. It localises to the cytoplasm. It is found in the perinuclear region. The protein localises to the endoplasmic reticulum. Plays a role during embryonic arterial endothelium differentiation and vascular morphogenesis through the ACVRL1 receptor-dependent signaling pathway upon stimulation by bone morphogenetic proteins, such as GDF2/BMP9 and BMP10. Involved in the regulation of nociception, acting as a modulator of the interaction between TRPA1 and TRPV1, two molecular sensors and mediators of pain signals in dorsal root ganglia (DRG) neurons. Mechanistically, it weakens their interaction, thereby releasing the inhibition of TRPA1 by TRPV1 and increasing the single-channel open probability of the TRPA1-TRPV1 complex. The sequence is that of Transmembrane protein 100 (Tmem100) from Mus musculus (Mouse).